Consider the following 322-residue polypeptide: tRNA uridine(34) hydroxylase (322 aa).

The region spanning 125–219 (QQEDTIVVDA…YGKDPEVQGE (95 aa)) is the Rhodanese domain. Cysteine 179 functions as the Cysteine persulfide intermediate in the catalytic mechanism.

It belongs to the TrhO family.

It carries out the reaction uridine(34) in tRNA + AH2 + O2 = 5-hydroxyuridine(34) in tRNA + A + H2O. Its function is as follows. Catalyzes oxygen-dependent 5-hydroxyuridine (ho5U) modification at position 34 in tRNAs. This Bacillus licheniformis (strain ATCC 14580 / DSM 13 / JCM 2505 / CCUG 7422 / NBRC 12200 / NCIMB 9375 / NCTC 10341 / NRRL NRS-1264 / Gibson 46) protein is tRNA uridine(34) hydroxylase.